A 633-amino-acid polypeptide reads, in one-letter code: Pentatricopeptide repeat-containing protein At1g43980, mitochondrial (633 aa).

The N-terminal 30 residues, M1–K30, are a transit peptide targeting the mitochondrion. 14 PPR repeats span residues T50 to K80, N81 to R111, D112 to P146, T147 to R178, N180 to R210, D211 to P245, D246 to S280, N281 to W311, D312 to P346, D347 to L380, D381 to K411, D412 to P447, D448 to P483, and G484 to E514. The type E motif stretch occupies residues I519–E594.

Belongs to the PPR family. PCMP-E subfamily.

The protein localises to the mitochondrion. This Arabidopsis thaliana (Mouse-ear cress) protein is Pentatricopeptide repeat-containing protein At1g43980, mitochondrial (PCMP-E58).